Consider the following 422-residue polypeptide: Histidine--tRNA ligase (422 aa).

Belongs to the class-II aminoacyl-tRNA synthetase family. In terms of assembly, homodimer.

It is found in the cytoplasm. It carries out the reaction tRNA(His) + L-histidine + ATP = L-histidyl-tRNA(His) + AMP + diphosphate + H(+). This is Histidine--tRNA ligase from Vibrio cholerae serotype O1 (strain ATCC 39541 / Classical Ogawa 395 / O395).